Consider the following 309-residue polypeptide: Cysteinyl leukotriene receptor 2 (309 aa).

Residues 1–26 (MEVTGTPSSYSNRNCTIENFKKEFYP) lie on the Extracellular side of the membrane. Residue asparagine 14 is glycosylated (N-linked (GlcNAc...) asparagine). The helical transmembrane segment at 27–47 (IIYLIIFFWGALGNGFSIYVF) threads the bilayer. At 48 to 56 (LQTCKKSTS) the chain is on the cytoplasmic side. Residues 57 to 77 (VNVFMLNLATSDFLFISTLPF) traverse the membrane as a helical segment. Over 78–98 (RADYYFRGSNWIFGDLACRVM) the chain is Extracellular. The cysteines at positions 95 and 171 are disulfide-linked. A helical transmembrane segment spans residues 99–119 (SYSLYVNMYTSIYFLTVLSVV). The Cytoplasmic portion of the chain corresponds to 120-138 (RFLATVHPFRMFHVTSVRS). Residues 139 to 159 (AWILCGIIWVFIMASSALLLV) traverse the membrane as a helical segment. At 160-187 (NGQEEKDNIISCLELSPQKFKSLLIMNH) the chain is on the extracellular side. A helical membrane pass occupies residues 188-208 (IAVAVGFLLPFLTLTVCYLLI). The Cytoplasmic portion of the chain corresponds to 209-229 (IRILLKAEIPESGPRAAHRKA). A helical transmembrane segment spans residues 230 to 250 (LTTIVIAMITFLLCFLPYHAL). At 251–271 (RTLHLVTWDKDSCGDVLHKAT) the chain is on the extracellular side. Residues 272 to 292 (VITLTMAAANSCFNPFLYYFA) traverse the membrane as a helical segment. Over 293–309 (GENFKARLRAIFSKVHL) the chain is Cytoplasmic.

Belongs to the G-protein coupled receptor 1 family. In terms of tissue distribution, widely expressed at low levels, with highest expression in the spleen, thymus and adrenal gland, and lower in the kidney, brain and peripheral blood leukocytes.

The protein localises to the cell membrane. Its function is as follows. Receptor for cysteinyl leukotrienes. The response is mediated via a G-protein that activates a phosphatidylinositol-calcium second messenger system. The rank order of affinities for the leukotrienes is LTC4 = LTD4 &gt;&gt; LTE4. The protein is Cysteinyl leukotriene receptor 2 (Cysltr2) of Mus musculus (Mouse).